The following is an 873-amino-acid chain: Alanine--tRNA ligase (873 aa).

Positions 563, 567, 664, and 668 each coordinate Zn(2+).

Belongs to the class-II aminoacyl-tRNA synthetase family. The cofactor is Zn(2+).

It localises to the cytoplasm. The catalysed reaction is tRNA(Ala) + L-alanine + ATP = L-alanyl-tRNA(Ala) + AMP + diphosphate. Catalyzes the attachment of alanine to tRNA(Ala) in a two-step reaction: alanine is first activated by ATP to form Ala-AMP and then transferred to the acceptor end of tRNA(Ala). Also edits incorrectly charged Ser-tRNA(Ala) and Gly-tRNA(Ala) via its editing domain. This is Alanine--tRNA ligase from Aromatoleum aromaticum (strain DSM 19018 / LMG 30748 / EbN1) (Azoarcus sp. (strain EbN1)).